A 180-amino-acid polypeptide reads, in one-letter code: Ribosome maturation factor RimM (180 aa).

One can recognise a PRC barrel domain in the interval 104 to 177 (PEEFHDHQLV…RVVVDPPGGL (74 aa)).

This sequence belongs to the RimM family. In terms of assembly, binds ribosomal protein uS19.

It is found in the cytoplasm. Functionally, an accessory protein needed during the final step in the assembly of 30S ribosomal subunit, possibly for assembly of the head region. Essential for efficient processing of 16S rRNA. May be needed both before and after RbfA during the maturation of 16S rRNA. It has affinity for free ribosomal 30S subunits but not for 70S ribosomes. The sequence is that of Ribosome maturation factor RimM from Salinispora arenicola (strain CNS-205).